A 333-amino-acid chain; its full sequence is Protein translocase subunit SecF (333 aa).

6 helical membrane passes run 27–47 (AIVM…NFGI), 152–172 (VWTA…YIWV), 180–200 (LGAV…FAVL), 207–227 (TTVA…VVVF), 253–275 (TLSR…LIWG), and 285–307 (AMVW…IVLF).

The protein belongs to the SecD/SecF family. SecF subfamily. In terms of assembly, forms a complex with SecD. Part of the essential Sec protein translocation apparatus which comprises SecA, SecYEG and auxiliary proteins SecDF-YajC and YidC.

It is found in the cell inner membrane. Part of the Sec protein translocase complex. Interacts with the SecYEG preprotein conducting channel. SecDF uses the proton motive force (PMF) to complete protein translocation after the ATP-dependent function of SecA. This is Protein translocase subunit SecF from Rhodobacter capsulatus (strain ATCC BAA-309 / NBRC 16581 / SB1003).